The following is a 331-amino-acid chain: MKKPVVIGLAVVVLAAVVAGGYWWYQSRQDNGLTLYGNVDIRTVNLSFRVGGRVESLAVDEGDAIKAGQVLGELDHKPYEIALMQAKAGVSVAQAQYDLMLAGYRDEEIAQAAAAVKQAQAAYDYAQNFYNRQQGLWKSRTISANDLENARSSRDQAQATLKSAQDKLRQYRSGNREQDIAQAKASLEQAQAQLAQAELNLQDSTLIAPSDGTLLTRAVEPGTVLNEGGTVFTVSLTRPVWVRAYVDERNLDQAQPGRKVLLYTDGRPDKPYHGQIGFVSPTAEFTPKTVETPDLRTDLVYRLRIVVTDADDALRQGMPVTVQFGNEAGHE.

An N-terminal signal peptide occupies residues 1-15; it reads MKKPVVIGLAVVVLA. Residues 107 to 208 adopt a coiled-coil conformation; sequence EEIAQAAAAV…LNLQDSTLIA (102 aa).

It belongs to the UPF0194 family.

It is found in the periplasm. This chain is UPF0194 membrane protein YbhG, found in Escherichia coli O139:H28 (strain E24377A / ETEC).